Reading from the N-terminus, the 3434-residue chain is Genome polyprotein (3434 aa).

The Cytoplasmic segment spans residues 1–106; it reads MSKKPGGPGR…NRGTKKKRGN (106 aa). Positions 2 to 15 are interaction with host EXOC1; it reads SKKPGGPGRNRAIN. A hydrophobic; homodimerization of capsid protein C region spans residues 37–72; that stretch reads LLDGRGPVRFVLALMTFFKFTALAPTKALLGRWKRI. The propeptide at 105–126 is ER anchor for the capsid protein C, removed in mature form by serine protease NS3; the sequence is GNNGPGLVMIITLMTVVSMVSS. Residues 107–126 form a helical membrane-spanning segment; sequence NGPGLVMIITLMTVVSMVSS. The Extracellular portion of the chain corresponds to 127-248; sequence LKLSNFQGKV…DSTKASRYLM (122 aa). Asn141 is a glycosylation site (N-linked (GlcNAc...) asparagine; by host). A helical membrane pass occupies residues 249–273; that stretch reads KTENWIIRNPGYAFVAVLLGWMLGS. Over 274-278 the chain is Cytoplasmic; it reads NNGQR. Residues 279–293 form a helical membrane-spanning segment; it reads VVFVVLLLLVAPAYS. The Extracellular segment spans residues 294-745; sequence FNCLGMSNRD…QVFGGAFRTL (452 aa). 8 cysteine pairs are disulfide-bonded: Cys296–Cys323, Cys353–Cys409, Cys353–Cys414, Cys367–Cys398, Cys385–Cys409, Cys385–Cys414, Cys483–Cys580, and Cys597–Cys628. The interval 391–404 is fusion peptide; sequence DRGWGNGCGLFGKG. Residues 746–766 traverse the membrane as a helical segment; sequence FGGMSWITQGLMGALLLWMGV. Residues 767–772 are Cytoplasmic-facing; it reads NARDRS. A helical membrane pass occupies residues 773-793; it reads IALVMLATGGVLLFLATNVHA. Residues 794–1218 are Extracellular-facing; that stretch reads DSGCAIDVGR…AFAEANSGGD (425 aa). 2 disulfide bridges follow: Cys797/Cys808 and Cys848/Cys936. N-linked (GlcNAc...) asparagine; by host glycosylation is found at Asn923, Asn968, and Asn1000. 6 cysteine pairs are disulfide-bonded: Cys972–Cys1016, Cys1073–Cys1122, Cys1084–Cys1105, Cys1084–Cys1106, Cys1105–Cys1109, and Cys1106–Cys1109. The chain crosses the membrane as a helical span at residues 1219-1239; that stretch reads VVHLALIAAFKIQPGFLAMTF. At 1240–1249 the chain is on the cytoplasmic side; the sequence is LRGKWTNQEN. A helical transmembrane segment spans residues 1250–1270; sequence ILLALGAAFFQMAATDLNFSL. The Lumenal portion of the chain corresponds to 1271–1286; sequence PGILNATATAWMLLRA. The chain crosses the membrane as a helical span at residues 1287-1307; it reads ATQPSTSAIVMPLLCLLAPGM. Residue Arg1308 is a topological domain, cytoplasmic. Residues 1309–1329 traverse the membrane as a helical segment; the sequence is LLYLDTYRITLIIIGICSLIG. Residues 1330–1340 lie on the Lumenal side of the membrane; the sequence is ERRRAAAKKKG. The chain crosses the membrane as a helical span at residues 1341–1361; that stretch reads AVLLGLALTSTGQFSASVMAA. The Cytoplasmic portion of the chain corresponds to 1362–1373; it reads GLMACNPNKKRG. The chain crosses the membrane as a helical span at residues 1374–1394; sequence WPATEVLTAVGLMFAIVGGLA. Topologically, residues 1395-1397 are lumenal; the sequence is ELD. Residues 1398–1418 form a helical membrane-spanning segment; it reads VDSMSIPFVLAGLMAVSYTIS. Topologically, residues 1419–1475 are cytoplasmic; sequence GKSTDLWLERAADITWETDAAITGTSQRLDVKLDDDGDFHLINDPGVPWKIWVIRMT. Residues 1426–1465 form an interacts with and activates NS3 protease region; sequence LERAADITWETDAAITGTSQRLDVKLDDDGDFHLINDPGV. Residues 1476–1496 constitute an intramembrane region (helical); the sequence is ALGFAAWTPWAIIPAGIGYWL. Residues 1497 to 2173 lie on the Cytoplasmic side of the membrane; it reads TVKYAKRGGV…MALEELPDAL (677 aa). The region spanning 1504–1681 is the Peptidase S7 domain; the sequence is GGVFWDTPAP…EREEEPVPEA (178 aa). Catalysis depends on charge relay system; for serine protease NS3 activity residues His1554, Asp1578, and Ser1638. Positions 1684-1840 constitute a Helicase ATP-binding domain; it reads ADMLRKKQLT…DTNAPVTDIQ (157 aa). Residues 1688 to 1691 form an important for RNA-binding region; the sequence is RKKQ. 1697 to 1704 contacts ATP; sequence LHPGAGKT. A DEAH box motif is present at residues 1788 to 1791; sequence DEAH. The region spanning 1851–2016 is the Helicase C-terminal domain; it reads GFEWITEYTG…GLVAQMYGPE (166 aa). Position 1892 is an N6-acetyllysine; by host (Lys1892). Residues 1956–1980 form a disordered region; that stretch reads ASAAQRRGRVGRNPSQIGDEYHYGG. The segment at 2167–2171 is regulates the ATPase activity of NS3 helicase; that stretch reads EELPD. Residues 2174–2194 traverse the membrane as a helical segment; that stretch reads ETITLIVALAVMTAGVFLLLV. At 2195-2198 the chain is on the lumenal side; it reads QRRG. An intramembrane region (helical) is located at residues 2199–2219; it reads IGKLGLGGMVLGLATFFLWMA. Position 2220 (Asp2220) is a topological domain, lumenal. A helical membrane pass occupies residues 2221–2241; that stretch reads VSGTKIAGTLLLALLMMIVLI. Residues 2242–2256 lie on the Cytoplasmic side of the membrane; sequence PEPEKQRSQTDNQLA. The chain crosses the membrane as a helical span at residues 2257–2277; the sequence is VFLICVLLVVGVVAANEYGML. The Lumenal portion of the chain corresponds to 2278–2313; sequence ERTKSDLGKIFSSTRQPQSALPLPSMNALALDLRPA. An intramembrane region (helical) is located at residues 2314–2334; the sequence is TAWALYGGSTVVLTPLIKHLV. Residues 2335–2368 are Lumenal-facing; that stretch reads TSEYITTSLASISAQAGSLFNLPRGLPFTELDFT. Residues 2369 to 2389 traverse the membrane as a helical segment; that stretch reads VVLVFLGCWGQVSLTTLITAA. The Cytoplasmic portion of the chain corresponds to 2390–2446; the sequence is ALATLHYGYMLPGWQAEALRAAQRRTAAGIMKNAVVDGLVATDVPELERTTPLMQKK. The chain crosses the membrane as a helical span at residues 2447–2467; the sequence is VGQILLIGVSAAALLVNPCVT. Over 2468-2471 the chain is Lumenal; it reads TVRE. The helical transmembrane segment at 2472–2492 threads the bilayer; that stretch reads AGILISAALLTLWDNGAIAVW. Residues 2493–3434 are Cytoplasmic-facing; the sequence is NSTTATGLCH…EVNVQEDRVL (942 aa). One can recognise an mRNA cap 0-1 NS5-type MT domain in the interval 2530–2795; the sequence is GRPGGRTLGE…DVNLGSGTRA (266 aa). The interval 2567 to 2587 is disordered; the sequence is SAARKARRDGNKTGGHPVSRG. Residue Ser2585 coordinates S-adenosyl-L-methionine. Phosphoserine is present on Ser2585. Lys2590 serves as the catalytic For 2'-O-MTase activity. The S-adenosyl-L-methionine site is built by Gly2615, Trp2616, Thr2633, Lys2634, Asp2660, and Val2661. The active-site For 2'-O-MTase activity is the Asp2675. Ile2676 lines the S-adenosyl-L-methionine pocket. Active-site for 2'-O-MTase activity residues include Lys2711 and Glu2747. Position 2749 (Tyr2749) interacts with S-adenosyl-L-methionine. Residues Glu2969, His2973, Cys2978, and Cys2981 each coordinate Zn(2+). Positions 3059–3211 constitute a RdRp catalytic domain; that stretch reads GKMYADDTAG…KPLDDRFANA (153 aa). The Zn(2+) site is built by His3246, Cys3262, and Cys3381.

In the N-terminal section; belongs to the class I-like SAM-binding methyltransferase superfamily. mRNA cap 0-1 NS5-type methyltransferase family. In terms of assembly, homodimer. Interacts (via N-terminus) with host EXOC1 (via C-terminus); this interaction results in EXOC1 degradation through the proteasome degradation pathway. Forms heterodimers with envelope protein E in the endoplasmic reticulum and Golgi. As to quaternary structure, homodimer; in the endoplasmic reticulum and Golgi. Interacts with protein prM. Interacts with non-structural protein 1. In terms of assembly, homodimer; Homohexamer when secreted. Interacts with envelope protein E. NS1 interacts with NS4B. Interacts with host complement protein CFH; this interaction leads to the degradation of C3. Interacts (via N-terminus) with serine protease NS3. As to quaternary structure, forms a heterodimer with serine protease NS3. May form homooligomers. In terms of assembly, forms a heterodimer with NS2B. Interacts with non-structural protein 2A (via N-terminus). Interacts with NS4B. Interacts with unphosphorylated RNA-directed RNA polymerase NS5; this interaction stimulates RNA-directed RNA polymerase NS5 guanylyltransferase activity. Interacts with serine protease NS3. As to quaternary structure, homodimer. Interacts with host STAT2; this interaction inhibits the phosphorylation of the latter, and, when all viral proteins are present (polyprotein), targets STAT2 for degradation. Interacts with serine protease NS3. Specific enzymatic cleavages in vivo yield mature proteins. Cleavages in the lumen of endoplasmic reticulum are performed by host signal peptidase, whereas cleavages in the cytoplasmic side are performed by serine protease NS3. Signal cleavage at the 2K-4B site requires a prior NS3 protease-mediated cleavage at the 4A-2K site. In terms of processing, cleaved in post-Golgi vesicles by a host furin, releasing the mature small envelope protein M, and peptide pr. This cleavage is incomplete as up to 30% of viral particles still carry uncleaved prM. Post-translationally, N-glycosylated. N-glycosylated. The excreted form is glycosylated and this is required for efficient secretion of the protein from infected cells. In terms of processing, acetylated by host KAT5. Acetylation modulates NS3 RNA-binding and unwinding activities and plays an important positive role for viral replication. Post-translationally, phosphorylated on serines residues. This phosphorylation may trigger NS5 nuclear localization.

It localises to the virion. It is found in the host nucleus. The protein resides in the host cytoplasm. The protein localises to the host perinuclear region. Its subcellular location is the secreted. It localises to the virion membrane. It is found in the host endoplasmic reticulum membrane. It carries out the reaction Selective hydrolysis of -Xaa-Xaa-|-Yaa- bonds in which each of the Xaa can be either Arg or Lys and Yaa can be either Ser or Ala.. It catalyses the reaction RNA(n) + a ribonucleoside 5'-triphosphate = RNA(n+1) + diphosphate. The enzyme catalyses a ribonucleoside 5'-triphosphate + H2O = a ribonucleoside 5'-diphosphate + phosphate + H(+). The catalysed reaction is ATP + H2O = ADP + phosphate + H(+). It carries out the reaction a 5'-end (5'-triphosphoguanosine)-ribonucleoside in mRNA + S-adenosyl-L-methionine = a 5'-end (N(7)-methyl 5'-triphosphoguanosine)-ribonucleoside in mRNA + S-adenosyl-L-homocysteine. It catalyses the reaction a 5'-end (N(7)-methyl 5'-triphosphoguanosine)-ribonucleoside in mRNA + S-adenosyl-L-methionine = a 5'-end (N(7)-methyl 5'-triphosphoguanosine)-(2'-O-methyl-ribonucleoside) in mRNA + S-adenosyl-L-homocysteine + H(+). Its function is as follows. Plays a role in virus budding by binding to the cell membrane and gathering the viral RNA into a nucleocapsid that forms the core of a mature virus particle. During virus entry, may induce genome penetration into the host cytoplasm after hemifusion induced by the surface proteins. Can migrate to the cell nucleus where it modulates host functions. Overcomes the anti-viral effects of host EXOC1 by sequestering and degrading the latter through the proteasome degradation pathway. Inhibits RNA silencing by interfering with host Dicer. Functionally, prevents premature fusion activity of envelope proteins in trans-Golgi by binding to envelope protein E at pH6.0. After virion release in extracellular space, gets dissociated from E dimers. In terms of biological role, acts as a chaperone for envelope protein E during intracellular virion assembly by masking and inactivating envelope protein E fusion peptide. prM is the only viral peptide matured by host furin in the trans-Golgi network probably to avoid catastrophic activation of the viral fusion activity in acidic Golgi compartment prior to virion release. prM-E cleavage is inefficient, and many virions are only partially matured. These uncleaved prM would play a role in immune evasion. Its function is as follows. May play a role in virus budding. Exerts cytotoxic effects by activating a mitochondrial apoptotic pathway through M ectodomain. May display a viroporin activity. Binds to host cell surface receptor and mediates fusion between viral and cellular membranes. Envelope protein is synthesized in the endoplasmic reticulum in the form of heterodimer with protein prM. They play a role in virion budding in the ER, and the newly formed immature particle is covered with 60 spikes composed of heterodimer between precursor prM and envelope protein E. The virion is transported to the Golgi apparatus where the low pH causes dissociation of PrM-E heterodimers and formation of E homodimers. prM-E cleavage is inefficient, and many virions are only partially matured. These uncleaved prM would play a role in immune evasion. Functionally, involved in immune evasion, pathogenesis and viral replication. Once cleaved off the polyprotein, is targeted to three destinations: the viral replication cycle, the plasma membrane and the extracellular compartment. Essential for viral replication. Required for formation of the replication complex and recruitment of other non-structural proteins to the ER-derived membrane structures. Excreted as a hexameric lipoparticle that plays a role against host immune response. Antagonizing the complement function. Binds to the host macrophages and dendritic cells. Inhibits signal transduction originating from Toll-like receptor 3 (TLR3). In terms of biological role, component of the viral RNA replication complex that functions in virion assembly and antagonizes the host alpha/beta interferon antiviral response. Its function is as follows. Required cofactor for the serine protease function of NS3. May have membrane-destabilizing activity and form viroporins. Displays three enzymatic activities: serine protease, NTPase and RNA helicase. NS3 serine protease, in association with NS2B, performs its autocleavage and cleaves the polyprotein at dibasic sites in the cytoplasm: C-prM, NS2A-NS2B, NS2B-NS3, NS3-NS4A, NS4A-2K and NS4B-NS5. NS3 RNA helicase binds RNA and unwinds dsRNA in the 3' to 5' direction. Functionally, regulates the ATPase activity of the NS3 helicase activity. NS4A allows NS3 helicase to conserve energy during unwinding. In terms of biological role, functions as a signal peptide for NS4B and is required for the interferon antagonism activity of the latter. Its function is as follows. Induces the formation of ER-derived membrane vesicles where the viral replication takes place. Inhibits interferon (IFN)-induced host STAT1 phosphorylation and nuclear translocation, thereby preventing the establishment of cellular antiviral state by blocking the IFN-alpha/beta pathway. Inhibits STAT2 translocation in the nucleus after IFN-alpha treatment. Replicates the viral (+) and (-) RNA genome, and performs the capping of genomes in the cytoplasm. NS5 methylates viral RNA cap at guanine N-7 and ribose 2'-O positions. Besides its role in RNA genome replication, also prevents the establishment of cellular antiviral state by blocking the interferon-alpha/beta (IFN-alpha/beta) signaling pathway. Inhibits host TYK2 and STAT2 phosphorylation, thereby preventing activation of JAK-STAT signaling pathway. The protein is Genome polyprotein of Usutu virus (USUV).